A 2873-amino-acid chain; its full sequence is Fibrillin-1 (2873 aa).

The first 24 residues, 1 to 24 (MRRGGLLEVALAFALLLESYTSHG), serve as a signal peptide directing secretion. Residues 25–44 (ADANLEAGSLKETRANRAKR) constitute a propeptide that is removed on maturation. Positions 45–81 (RGGGGHDALKGPNVCGSRYNAYCCPGWKTLPGGNQCI) are fibrillin unique N-terminal (FUN) domain. The interval 45 to 452 (RGGGGHDALK…PPRVLPFNVT (408 aa)) is N-terminal domain. 11 disulfide bridges follow: Cys-59-Cys-68, Cys-67-Cys-80, Cys-85-Cys-94, Cys-89-Cys-100, Cys-102-Cys-111, Cys-119-Cys-129, Cys-123-Cys-134, Cys-136-Cys-145, Cys-150-Cys-160, Cys-154-Cys-166, and Cys-168-Cys-177. EGF-like domains lie at 81–112 (IVPI…PSCG), 115–146 (SIQH…THCG), and 147–178 (QPVC…PQCE). An interaction with MFAP4 region spans residues 119-329 (CSIRCMNGGS…YTSPDGTRCV (211 aa)). The TB 1 domain maps to 184–236 (GPCFTVVSNQMCQGQLSGIVCTKTLCCATVGRAWGHPCEMCPAQPHPCRRGFI). The tract at residues 195–221 (CQGQLSGIVCTKTLCCATVGRAWGHPC) is hybrid domain 1. Positions 246–287 (DVDECQAIPGMCQGGNCINTVGSFECKCPAGHKFNEVSQKCE) constitute an EGF-like 4; calcium-binding domain. Disulfide bonds link Cys-250/Cys-262, Cys-257/Cys-271, Cys-273/Cys-286, Cys-292/Cys-304, Cys-299/Cys-313, and Cys-315/Cys-328. Residue Ser-268 is glycosylated (O-linked (Glc) serine). The 42-residue stretch at 288–329 (DIDECSTIPGVCDGGECTNTVSSYFCKCPPGFYTSPDGTRCV) folds into the EGF-like 5; calcium-binding domain. Residues 334-389 (GYCYTALANGRCSNQLPQSITKMQCCCDLGRCWSPGVTVAPEMCPIRSTEDFNKLC) form the TB 2 domain. An N-linked (GlcNAc...) asparagine glycan is attached at Asn-450. An EGF-like 6 domain is found at 451–491 (VTDYCQLVRYLCQNGRCIPTPGSYRCECNKGFQLDIRGECI). 15 cysteine pairs are disulfide-bonded: Cys-455/Cys-467, Cys-462/Cys-476, Cys-478/Cys-490, Cys-496/Cys-506, Cys-501/Cys-515, Cys-517/Cys-530, Cys-536/Cys-548, Cys-543/Cys-557, Cys-559/Cys-572, Cys-578/Cys-589, Cys-584/Cys-598, Cys-600/Cys-613, Cys-619/Cys-630, Cys-625/Cys-639, and Cys-641/Cys-654. A glycan (O-linked (Glc) serine) is linked at Ser-473. Residues 492–531 (DVDECEKNPCTGGECINNQGSYTCHCRAGYQSTLTRTECR) form the EGF-like 7; calcium-binding domain. Ser-512 carries O-linked (Glc) serine glycosylation. The 42-residue stretch at 532 to 573 (DIDECLQNGRICNNGRCINTDGSFHCVCNAGFHVTRDGKNCE) folds into the EGF-like 8; calcium-binding domain. The region spanning 574–614 (DMDECSIRNMCLNGMCINEDGSFKCICKPGFQLASDGRYCK) is the EGF-like 9; calcium-binding domain. One can recognise an EGF-like 10; calcium-binding domain in the interval 615–655 (DINECETPGICMNGRCVNTDGSYRCECFPGLAVGLDGRVCV). One can recognise a TB 3 domain in the interval 661–713 (STCYGGYRRGQCVKPLFGAVTKSECCCASTEYAFGEPCQPCPAQNSAEYQALC). An EGF-like 11; calcium-binding domain is found at 725–766 (DINECALDPDICPNGICENLRGTYKCICNSGYEVDITGKNCV). 16 disulfides stabilise this stretch: Cys-729-Cys-741, Cys-736-Cys-750, Cys-752-Cys-765, Cys-771-Cys-783, Cys-778-Cys-792, Cys-794-Cys-807, Cys-813-Cys-823, Cys-818-Cys-832, Cys-834-Cys-847, Cys-855-Cys-877, Cys-864-Cys-889, Cys-878-Cys-892, Cys-898-Cys-910, Cys-916-Cys-928, Cys-923-Cys-937, and Cys-939-Cys-952. The EGF-like 12; calcium-binding domain occupies 767 to 808 (DINECVLNSLLCDNGQCRNTPGSFVCTCPKGFVYKPDLKTCE). One can recognise an EGF-like 13; calcium-binding domain in the interval 809–848 (DIDECESSPCINGVCKNSPGSFICECSPESTLDPTKTICI). In terms of domain architecture, TB 4 spans 853 to 904 (GTCWQTVIDGRCEININGATLKSECCSSLGAAWGSPCTICQLDPICGKGFSR). Positions 862–887 (GRCEININGATLKSECCSSLGAAWGS) are hybrid domain 2. An EGF-like 14; calcium-binding domain is found at 912 to 953 (DINECEVFPGVCKNGLCVNSRGSFKCECPNGMTLDATGRICL). The TB 5 domain occupies 958 to 1010 (ETCFLKYDDEECTLPIAGRHRMDACCCSVGAAWGTEECEECPLRNSREYEELC). In terms of domain architecture, EGF-like 15; calcium-binding spans 1030–1071 (DINECKMIPSLCTHGKCRNTIGSFKCRCDSGFALDSEERNCT). Disulfide bonds link Cys-1034–Cys-1046, Cys-1041–Cys-1055, Cys-1057–Cys-1070, Cys-1076–Cys-1088, Cys-1083–Cys-1097, Cys-1099–Cys-1113, Cys-1119–Cys-1131, Cys-1126–Cys-1140, Cys-1142–Cys-1155, Cys-1161–Cys-1173, Cys-1168–Cys-1182, Cys-1184–Cys-1197, Cys-1203–Cys-1214, Cys-1210–Cys-1223, Cys-1225–Cys-1238, Cys-1244–Cys-1256, Cys-1251–Cys-1265, Cys-1267–Cys-1280, Cys-1286–Cys-1298, Cys-1293–Cys-1307, Cys-1309–Cys-1322, Cys-1328–Cys-1341, Cys-1335–Cys-1350, Cys-1352–Cys-1363, Cys-1369–Cys-1382, Cys-1376–Cys-1391, Cys-1393–Cys-1404, Cys-1410–Cys-1422, Cys-1417–Cys-1431, Cys-1433–Cys-1446, Cys-1452–Cys-1463, Cys-1458–Cys-1472, Cys-1474–Cys-1487, Cys-1493–Cys-1504, Cys-1499–Cys-1513, Cys-1515–Cys-1528, Cys-1536–Cys-1564, Cys-1551–Cys-1576, Cys-1565–Cys-1579, Cys-1566–Cys-1591, Cys-1612–Cys-1624, Cys-1619–Cys-1633, Cys-1635–Cys-1648, Cys-1654–Cys-1665, Cys-1660–Cys-1674, and Cys-1676–Cys-1689. The N-linked (GlcNAc...) asparagine glycan is linked to Asn-1069. In terms of domain architecture, EGF-like 16; calcium-binding spans 1072-1114 (DIDECRISPDLCGRGQCVNTPGDFECKCDEGYESGFMMMKNCM). The region spanning 1115–1156 (DIDECQRDPLLCRGGICHNTEGSYRCECPPGHQLSPNISACI) is the EGF-like 17; calcium-binding domain. Ser-1137 is a glycosylation site (O-linked (Glc) serine). The N-linked (GlcNAc...) asparagine glycan is linked to Asn-1151. In terms of domain architecture, EGF-like 18; calcium-binding spans 1157 to 1198 (DINECELSANLCPHGRCVNLIGKYQCACNPGYHPTHDRLFCV). Positions 1199–1239 (DIDECSIMNGGCETFCTNSDGSYECSCQPGFALMPDQRSCT) constitute an EGF-like 19; calcium-binding domain. O-linked (Glc) serine glycosylation occurs at Ser-1220. The 42-residue stretch at 1240–1281 (DIDECEDNPNICDGGQCTNIPGEYRCLCYDGFMASEDMKTCV) folds into the EGF-like 20; calcium-binding domain. Residues 1282–1323 (DVNECDLNPNICLSGTCENTKGSFICHCDMGYSGKKGKTGCT) form the EGF-like 21; calcium-binding domain. An O-linked (Glc) serine glycan is attached at Ser-1304. An EGF-like 22; calcium-binding domain is found at 1324–1364 (DINECEIGAHNCGRHAVCTNTAGSFKCSCSPGWIGDGIKCT). An O-linked (Glc) serine glycan is attached at Ser-1347. Residues 1365–1405 (DLDECSNGTHMCSQHADCKNTMGSYRCLCKDGYTGDGFTCT) enclose the EGF-like 23; calcium-binding domain. Asn-1371 carries N-linked (GlcNAc...) asparagine glycosylation. An O-linked (Glc) serine glycan is attached at Ser-1388. Residues 1406–1447 (DLDECSENLNLCGNGQCLNAPGGYRCECDMGFVPSADGKACE) form the EGF-like 24; calcium-binding domain. The EGF-like 25; calcium-binding domain occupies 1448-1488 (DIDECSLPNICVFGTCHNLPGLFRCECEIGYELDRSGGNCT). Asn-1486 carries N-linked (GlcNAc...) asparagine glycosylation. The 41-residue stretch at 1489–1529 (DVNECLDPTTCISGNCVNTPGSYTCDCPPDFELNPTRVGCV) folds into the EGF-like 26; calcium-binding domain. O-linked (Glc) serine glycosylation is present at Ser-1510. The tract at residues 1530–2733 (DTRSGNCYLD…GYPKRGRKRR (1204 aa)) is C-terminal domain. Residues 1534 to 1591 (GNCYLDIRPRGDNGDTACSNEIGVGVSKASCCCSLGKAWGTPCELCPSVNTSEYKILC) form the TB 6 domain. Residues 1543–1545 (RGD) carry the Cell attachment site motif. N-linked (GlcNAc...) asparagine glycosylation occurs at Asn-1583. Positions 1608-1649 (DIDECQELPGLCQGGKCINTFGSFQCRCPTGYYLNEDTRVCD) constitute an EGF-like 27; calcium-binding domain. The O-linked (Glc) serine glycan is linked to Ser-1630. Positions 1650 to 1690 (DVNECETPGICGPGTCYNTVGNYTCICPPDYMQVNGGNNCM) constitute an EGF-like 28; calcium-binding domain. A glycan (N-linked (GlcNAc...) asparagine) is linked at Asn-1671. One can recognise a TB 7 domain in the interval 1695–1750 (SLCYRNYYADNQTCDGELLFNMTKKMCCCSYNIGRAWNKPCEQCPIPSTDEFATLC). N-linked (GlcNAc...) asparagine glycosylation is found at Asn-1705 and Asn-1715. In terms of domain architecture, EGF-like 29; calcium-binding spans 1768–1809 (DIDECREIPGVCENGVCINMVGSFRCECPVGFFYNDKLLVCE). Intrachain disulfides connect Cys-1772–Cys-1784, Cys-1779–Cys-1793, Cys-1795–Cys-1808, Cys-1814–Cys-1826, Cys-1820–Cys-1835, Cys-1837–Cys-1849, Cys-1855–Cys-1867, Cys-1862–Cys-1876, Cys-1878–Cys-1891, Cys-1897–Cys-1907, Cys-1902–Cys-1916, Cys-1918–Cys-1930, Cys-1936–Cys-1949, Cys-1944–Cys-1958, Cys-1960–Cys-1973, Cys-1979–Cys-1991, Cys-1986–Cys-2000, Cys-2002–Cys-2013, Cys-2019–Cys-2031, Cys-2026–Cys-2040, Cys-2042–Cys-2055, Cys-2063–Cys-2085, Cys-2072–Cys-2098, Cys-2086–Cys-2101, Cys-2087–Cys-2113, Cys-2133–Cys-2144, Cys-2139–Cys-2153, Cys-2155–Cys-2166, Cys-2172–Cys-2183, Cys-2178–Cys-2192, Cys-2194–Cys-2206, Cys-2212–Cys-2223, Cys-2219–Cys-2232, Cys-2234–Cys-2247, Cys-2253–Cys-2267, Cys-2260–Cys-2276, Cys-2278–Cys-2291, Cys-2297–Cys-2309, Cys-2304–Cys-2318, and Cys-2320–Cys-2333. Residues 1810–1850 (DIDECQNGPVCQRNAECINTAGSYRCDCKPGYRLTSTGQCN) form the EGF-like 30; calcium-binding domain. An O-linked (Glc) serine glycan is attached at Ser-1832. The 42-residue stretch at 1851-1892 (DRNECQEIPNICSHGQCIDTVGSFYCLCHTGFKTNVDQTMCL) folds into the EGF-like 31; calcium-binding domain. Ser-1873 carries O-linked (Glc) serine glycosylation. The region spanning 1893–1931 (DINECERDACGNGTCRNTIGSFNCRCNHGFILSHNNDCI) is the EGF-like 32; calcium-binding domain. Asn-1904 carries an N-linked (GlcNAc...) asparagine glycan. Ser-1913 carries O-linked (Glc) serine glycosylation. Residues 1932–1974 (DVDECATGNGNLCRNGQCVNTVGSFQCRCNEGYEVAPDGRTCV) form the EGF-like 33; calcium-binding domain. O-linked (Glc) serine glycosylation is present at Ser-1955. Residues 1975–2014 (DINECVLDPGKCAPGTCQNLDGSYRCICPPGYSLQNDKCE) enclose the EGF-like 34; calcium-binding domain. Residues 2015-2056 (DIDECVEEPEICALGTCSNTEGSFKCLCPEGFSLSSTGRRCQ) enclose the EGF-like 35; calcium-binding domain. O-linked (Glc) serine glycosylation is present at Ser-2037. One can recognise a TB 8 domain in the interval 2061-2113 (SYCYAKFEGGKCSSPKSRNHSKQECCCALKGEGWGDPCELCPTEPDEAFRQIC). Residue Asn-2079 is glycosylated (N-linked (GlcNAc...) asparagine). An EGF-like 36; calcium-binding domain is found at 2129-2167 (DMDECKEPDVCRHGQCINTDGSYRCECPFGYILEGNECV). Ser-2150 is a glycosylation site (O-linked (Glc) serine). An EGF-like 37; calcium-binding domain is found at 2168–2207 (DTDECSVGNPCGNGTCKNVIGGFECTCEEGFEPGPMMTCE). Asn-2180 carries N-linked (GlcNAc...) asparagine glycosylation. Residues 2208 to 2248 (DINECAQNPLLCAFRCVNTYGSYECKCPVGYVLREDRRMCK) enclose the EGF-like 38; calcium-binding domain. The O-linked (Glc) serine glycan is linked to Ser-2229. Residues 2249-2292 (DEDECAEGKHDCTEKQMECKNLIGTYMCICGPGYQRRPDGEGCI) form the EGF-like 39; calcium-binding domain. The EGF-like 40; calcium-binding domain occupies 2293-2334 (DENECQTKPGICENGRCLNTLGSYTCECNDGFTASPTQDECL). The O-linked (Glc) serine glycan is linked to Ser-2315. In terms of domain architecture, TB 9 spans 2339–2392 (GYCFSEVLQNMCQIGSSNRNPVTKSECCCDGGRGWGPHCEICPFEGTVAYKKLC). The 42-residue stretch at 2404–2445 (DIDECKVIHDVCRNGECVNDRGSYHCICKTGYTPDITGTACV) folds into the EGF-like 41; calcium-binding domain. 21 disulfide bridges follow: Cys-2408–Cys-2420, Cys-2415–Cys-2429, Cys-2431–Cys-2444, Cys-2450–Cys-2461, Cys-2457–Cys-2470, Cys-2472–Cys-2485, Cys-2491–Cys-2502, Cys-2498–Cys-2511, Cys-2513–Cys-2524, Cys-2530–Cys-2543, Cys-2537–Cys-2552, Cys-2554–Cys-2567, Cys-2573–Cys-2583, Cys-2579–Cys-2592, Cys-2594–Cys-2607, Cys-2613–Cys-2624, Cys-2619–Cys-2633, Cys-2635–Cys-2648, Cys-2654–Cys-2665, Cys-2661–Cys-2674, and Cys-2676–Cys-2688. The EGF-like 42; calcium-binding domain maps to 2446–2486 (DLNECNQAPKPCNFICKNTEGSYQCSCPKGYILQEDGRSCK). A glycan (O-linked (Glc) serine) is linked at Ser-2467. Residues 2487–2525 (DLDECATKQHNCQFLCVNTIGGFTCKCPPGFTQHHTACI) enclose the EGF-like 43; calcium-binding domain. In terms of domain architecture, EGF-like 44; calcium-binding spans 2526–2568 (DNNECTSDINLCGSKGVCQNTPGSFTCECQRGFSLDQSGASCE). An O-linked (Glc) serine glycan is attached at Ser-2549. An EGF-like 45; calcium-binding domain is found at 2569 to 2608 (DVDECEGNHRCQHGCQNIIGGYRCSCPQGYLQHYQWNQCV). The 41-residue stretch at 2609 to 2649 (DENECLSAHVCGGASCHNTLGSYKCMCPTGFQYEQFSGGCQ) folds into the EGF-like 46; calcium-binding domain. Residue Ser-2630 is glycosylated (O-linked (Glc) serine). One can recognise an EGF-like 47; calcium-binding domain in the interval 2650–2689 (DINECGSSQAPCSYGCSNTEGGYLCGCPPGYFRIGQGHCV). Phosphoserine occurs at positions 2704, 2705, and 2711. Residues 2728 to 2747 (RGRKRRSTNETDASDIQDGS) are disordered. N-linked (GlcNAc...) asparagine glycans are attached at residues Asn-2736, Asn-2752, and Asn-2769.

This sequence belongs to the fibrillin family. In terms of assembly, interacts with COL16A1. Interacts with integrin alpha-V/beta-3. Interacts with ADAMTS10; this interaction promotes microfibril assembly. Interacts with THSD4; this interaction promotes fibril formation. Interacts (via N-terminal domain) with FBLN2 and FBLN5. Interacts with ELN. Forms a ternary complex with ELN and FBLN2 or FBLN5 and a significant interaction with ELN seen only in the presence of FBLN2 or FBLN5. Interacts (via N-terminal domain) with LTBP2 (via C-terminal domain) in a Ca(+2)-dependent manner. Interacts (via N-terminal domain) with LTBP1 (via C-terminal domain). Interacts with integrins ITGA5:ITGB1, ITGAV:ITGB3 and ITGAV:ITGB6. Interacts (via N-terminal domain) with BMP2, BMP4, BMP7, BMP10 and GDF5. Interacts (via N-terminal domain) with MFAP2 and MFAP5. Interacts with ADAMTSL5. Interacts with MFAP4. Interacts (via N-terminal domain) with TNFSF11 in a Ca(+2)-dependent manner. Interacts (via N-terminal domain) with EFEMP2; this interaction inhibits EFEMP2 binding to LOX and ELN. In terms of processing, cleavage of N- and C-terminus by furin is required for incorporation into the extracellular matrix and assembly into microfibrils. The C-terminus, which corresponds to the Asprosin chain, was initially thought to constitute a propeptide. Fibrillin-1 and Asprosin chains are still linked together during the secretion from cells, but are subsequently separated by furin, an essential step for incorporation of Fibrillin-1 into the nascent microfibrils. Forms intermolecular disulfide bonds either with other fibrillin-1 molecules or with other components of the microfibrils. Post-translationally, O-glycosylated on serine residues by POGLUT2 and POGLUT3 which is necessary for efficient protein secretion. As to expression, strongly expressed during the first week of osteoblast differentiation. Secreted by white adipose tissue (at protein level).

It is found in the secreted. It localises to the extracellular space. The protein localises to the extracellular matrix. Its function is as follows. Structural component of the 10-12 nm diameter microfibrils of the extracellular matrix, which conveys both structural and regulatory properties to load-bearing connective tissues. Fibrillin-1-containing microfibrils provide long-term force bearing structural support. In tissues such as the lung, blood vessels and skin, microfibrils form the periphery of the elastic fiber, acting as a scaffold for the deposition of elastin. In addition, microfibrils can occur as elastin-independent networks in tissues such as the ciliary zonule, tendon, cornea and glomerulus where they provide tensile strength and have anchoring roles. Fibrillin-1 also plays a key role in tissue homeostasis through specific interactions with growth factors, such as the bone morphogenetic proteins (BMPs), growth and differentiation factors (GDFs) and latent transforming growth factor-beta-binding proteins (LTBPs), cell-surface integrins and other extracellular matrix protein and proteoglycan components. Regulates osteoblast maturation by controlling TGF-beta bioavailability and calibrating TGF-beta and BMP levels, respectively. Negatively regulates osteoclastogenesis by binding and sequestering an osteoclast differentiation and activation factor TNFSF11. This leads to disruption of TNFSF11-induced Ca(2+) signaling and impairment of TNFSF11-mediated nuclear translocation and activation of transcription factor NFATC1 which regulates genes important for osteoclast differentiation and function. Mediates cell adhesion via its binding to cell surface receptors integrins ITGAV:ITGB3 and ITGA5:ITGB1. Binds heparin and this interaction plays an important role in the assembly of microfibrils. Functionally, adipokine secreted by white adipose tissue that plays an important regulatory role in the glucose metabolism of liver, muscle and pancreas. Hormone that targets the liver in response to fasting to increase plasma glucose levels. Binds the olfactory receptor Olfr734 at the surface of hepatocytes and promotes hepatocyte glucose release by activating the protein kinase A activity in the liver, resulting in rapid glucose release into the circulation. May act as a regulator of adaptive thermogenesis by inhibiting browning and energy consumption, while increasing lipid deposition in white adipose tissue. Also acts as an orexigenic hormone that increases appetite: crosses the blood brain barrier and exerts effects on the hypothalamus. In the arcuate nucleus of the hypothalamus, asprosin directly activates orexigenic AgRP neurons and indirectly inhibits anorexigenic POMC neurons, resulting in appetite stimulation. Activates orexigenic AgRP neurons via binding to the olfactory receptor Olfr734. May also play a role in sperm motility in testis via interaction with Olfr734 receptor. This chain is Fibrillin-1, found in Mus musculus (Mouse).